Reading from the N-terminus, the 617-residue chain is Cytoplasmic polyadenylation element-binding protein 1 (617 aa).

Residues 1–38 are disordered; the sequence is MQSQLKACGDAPAPSCSLHHRRTISKKPSNGGNSGGGG. RRM domains are found at residues 273-377 and 394-465; these read RKVF…AWRL and RTVF…HADT. Disordered stretches follow at residues 534 to 568 and 592 to 617; these read DQTR…QNVT and NQNN…AIGY. Residues 542–563 show a composition bias toward basic residues; the sequence is PPHHSTSHYHHRSTPSHHHNHT.

As to quaternary structure, interacts with fbf-1.

Its function is as follows. Cytoplasmic polyadenylation element binding protein that binds to and regulates the translation of specific mRNAs. Essential for progression through meiosis. Involved in spermatogenesis. This is Cytoplasmic polyadenylation element-binding protein 1 (cpb-1) from Caenorhabditis japonica.